The following is a 366-amino-acid chain: Sodium-potassium/proton antiporter ChaA (366 aa).

The Cytoplasmic portion of the chain corresponds to 1–16; that stretch reads MSNAQEAVKTRHKETS. The next 2 helical transmembrane spans lie at 17 to 37 and 38 to 58; these read LIFP…QTLP and VVIA…FSVV. Residues 59–74 lie on the Cytoplasmic side of the membrane; it reads RHADVLAHRLGEPYGS. Residues 75 to 95 traverse the membrane as a helical segment; the sequence is LILSLSVVILEVSLISALMAT. The Periplasmic portion of the chain corresponds to 96 to 106; that stretch reads GDAAPTLMRDT. The helical transmembrane segment at 107–127 threads the bilayer; it reads LYSIIMIVTGGLVGFSLLLGG. The Cytoplasmic segment spans residues 128–143; the sequence is RKFATQYMNLFGIKQY. A helical membrane pass occupies residues 144–164; that stretch reads LIALFPLAIIVLVFPMALPAA. The Periplasmic segment spans residues 165–167; that stretch reads NFS. The helical transmembrane segment at 168 to 188 threads the bilayer; that stretch reads TGQALLVALISAAMYGVFLLI. Residues 189–216 are Cytoplasmic-facing; it reads QTKTHQSLFVYEHEDDSDDDDPHHGKPS. Residues 217 to 237 traverse the membrane as a helical segment; sequence AHSSLWHAIWLIIHLIAVIAV. Residues 238–255 lie on the Periplasmic side of the membrane; sequence TKMNASSLETLLDSMNAP. The chain crosses the membrane as a helical span at residues 256–276; the sequence is VAFTGFLVALLILSPEGLGAL. Topologically, residues 277–290 are cytoplasmic; the sequence is KAVLNNQVQRAMNL. A helical membrane pass occupies residues 291–311; sequence FFGSVLATISLTVPVVTLIAF. The Periplasmic segment spans residues 312–318; it reads MTGNELQ. A helical transmembrane segment spans residues 319-339; it reads FALGAPEMVVMVASLVLCHIS. Over 340–345 the chain is Cytoplasmic; that stretch reads FSTGRT. A helical membrane pass occupies residues 346 to 366; that stretch reads NVLNGAAHLALFAAYLMTIFA.

Belongs to the Ca(2+):cation antiporter (CaCA) (TC 2.A.19) family.

It is found in the cell inner membrane. The catalysed reaction is Na(+)(in) + H(+)(out) = Na(+)(out) + H(+)(in). It catalyses the reaction K(+)(in) + H(+)(out) = K(+)(out) + H(+)(in). It carries out the reaction Ca(2+)(in) + H(+)(out) = Ca(2+)(out) + H(+)(in). Its activity is regulated as follows. Pronounced pH dependence with sodium as substrate. Ca(2+)/H(+) and Na(+)/H(+) antiporter activities are both inhibited by magnesium. Ca(2+)/H(+) activity is inhibited by the proton ionophore carbonyl cyanide m-chlorophenylhydrazone (CCCP). In terms of biological role, sodium exporter that functions mainly at alkaline pH. Can also function as a potassium/proton and calcium/proton antiporter at alkaline pH. Does not play a major role in calcium export. The K(+)/H(+) antiporter activity may enable E.coli to adapt to K(+) salinity stress and to maintain K(+) homeostasis. This Escherichia coli (strain K12) protein is Sodium-potassium/proton antiporter ChaA.